Consider the following 26-residue polypeptide: GIGAILKVLATGLPTLISWIKNKRKQ.

Glycine 1 is subject to N-formylglycine; partial. A Glutamine amide modification is found at glutamine 26.

It belongs to the melittin family. In terms of assembly, monomer (in solution and for integration into membranes), homotetramer (in solution and potentially as a toroidal pore in membranes), and potenially homomultimer (as a toroidal pore in membranes). Expressed by the venom gland.

It localises to the secreted. The protein resides in the target cell membrane. Its function is as follows. Main toxin of bee venom with strong hemolytic activity and antimicrobial activity. It has enhancing effects on bee venom phospholipase A2 activity. This amphipathic toxin binds to negatively charged membrane surface and forms pore by inserting into lipid bilayers inducing the leakage of ions and molecules and the enhancement of permeability that ultimately leads to cell lysis. It acts as a voltage-gated pore with higher selectivity for anions over cations. The ion conductance has been shown to be voltage-dependent. Self-association of melittin in membranes is promoted by high ionic strength, but not by the presence of negatively charged lipids. In vivo, intradermal injection into healthy human volunteers produce sharp pain sensation and an inflammatory response. It produces pain by activating primary nociceptor cells directly and indirectly due to its ability to activate plasma membrane phospholipase A2 and its pore-forming activity. This chain is Melittin (MELT), found in Apis florea (Dwarf honeybee).